The following is a 295-amino-acid chain: MSLFNVSNGLRTALRPSVASSSRVAAFSTTAAARLATPTSDNVGSSGKPQHLKQFKIYRWNPDKPSEKPRLQSYTLDLNQTGPMVLDALIKIKNEIDPTLTFRRSCREGICGSCAMNIDGVNTLACLCRIDKQNDTKIYPLPHMYIVKDLVPDLTQFYKQYRSIEPFLKSNNTPSEGEHLQSPEERRRLDGLYECILCACCSTSCPSYWWNQDEYLGPAVLMQAYRWMADSRDDFGEERRQKLENTFSLYRCHTIMNCSRTCPKNLNPGKAIAQIKKDMAVGAPKASERPIMASS.

The 2Fe-2S ferredoxin-type domain maps to 67–144 (EKPRLQSYTL…DTKIYPLPHM (78 aa)). [2Fe-2S] cluster-binding residues include Cys-106, Cys-111, Cys-114, and Cys-126. Positions 185–215 (ERRRLDGLYECILCACCSTSCPSYWWNQDEY) constitute a 4Fe-4S ferredoxin-type domain. Residues Cys-195, Cys-198, and Cys-201 each coordinate [4Fe-4S] cluster. Residue Cys-205 participates in [3Fe-4S] cluster binding. An a ubiquinone-binding site is contributed by Trp-210. [3Fe-4S] cluster-binding residues include Cys-252 and Cys-258. Cys-262 serves as a coordination point for [4Fe-4S] cluster.

Belongs to the succinate dehydrogenase/fumarate reductase iron-sulfur protein family. As to quaternary structure, component of complex II composed of four subunits: a flavoprotein (FP), an iron-sulfur protein (IP), and a cytochrome b composed of a large and a small subunit. The cofactor is [2Fe-2S] cluster. [3Fe-4S] cluster serves as cofactor. It depends on [4Fe-4S] cluster as a cofactor.

It localises to the mitochondrion inner membrane. It catalyses the reaction a quinone + succinate = fumarate + a quinol. The protein operates within carbohydrate metabolism; tricarboxylic acid cycle; fumarate from succinate (eukaryal route): step 1/1. Iron-sulfur protein (IP) subunit of succinate dehydrogenase (SDH) that is involved in complex II of the mitochondrial electron transport chain and is responsible for transferring electrons from succinate to ubiquinone (coenzyme Q). The protein is Succinate dehydrogenase [ubiquinone] iron-sulfur subunit, mitochondrial (SDH2) of Mycosarcoma maydis (Corn smut fungus).